Here is a 983-residue protein sequence, read N- to C-terminus: Glycine dehydrogenase (decarboxylating) (983 aa).

Lys-731 bears the N6-(pyridoxal phosphate)lysine mark.

This sequence belongs to the GcvP family. The glycine cleavage system is composed of four proteins: P, T, L and H. Pyridoxal 5'-phosphate is required as a cofactor.

The catalysed reaction is N(6)-[(R)-lipoyl]-L-lysyl-[glycine-cleavage complex H protein] + glycine + H(+) = N(6)-[(R)-S(8)-aminomethyldihydrolipoyl]-L-lysyl-[glycine-cleavage complex H protein] + CO2. In terms of biological role, the glycine cleavage system catalyzes the degradation of glycine. The P protein binds the alpha-amino group of glycine through its pyridoxal phosphate cofactor; CO(2) is released and the remaining methylamine moiety is then transferred to the lipoamide cofactor of the H protein. This chain is Glycine dehydrogenase (decarboxylating), found in Nostoc sp. (strain PCC 7120 / SAG 25.82 / UTEX 2576).